A 513-amino-acid polypeptide reads, in one-letter code: Mannosyl-oligosaccharide alpha-1,2-mannosidase 1B (513 aa).

Positions 1–21 (MHLPSLSLSLTALAIASPSAA) are cleaved as a signal peptide. Asn-97, Asn-117, Asn-150, Asn-184, Asn-251, Asn-322, Asn-348, and Asn-368 each carry an N-linked (GlcNAc...) asparagine glycan. A disulfide bridge connects residues Cys-334 and Cys-363. Glu-377 (proton donor) is an active-site residue. Thr-503 serves as a coordination point for Ca(2+).

This sequence belongs to the glycosyl hydrolase 47 family. Monomer. It depends on Ca(2+) as a cofactor. Requires Mg(2+) as cofactor.

It is found in the cytoplasmic vesicle lumen. It catalyses the reaction N(4)-(alpha-D-Man-(1-&gt;2)-alpha-D-Man-(1-&gt;2)-alpha-D-Man-(1-&gt;3)-[alpha-D-Man-(1-&gt;2)-alpha-D-Man-(1-&gt;3)-[alpha-D-Man-(1-&gt;2)-alpha-D-Man-(1-&gt;6)]-alpha-D-Man-(1-&gt;6)]-beta-D-Man-(1-&gt;4)-beta-D-GlcNAc-(1-&gt;4)-beta-D-GlcNAc)-L-asparaginyl-[protein] (N-glucan mannose isomer 9A1,2,3B1,2,3) + 4 H2O = N(4)-(alpha-D-Man-(1-&gt;3)-[alpha-D-Man-(1-&gt;3)-[alpha-D-Man-(1-&gt;6)]-alpha-D-Man-(1-&gt;6)]-beta-D-Man-(1-&gt;4)-beta-D-GlcNAc-(1-&gt;4)-beta-D-GlcNAc)-L-asparaginyl-[protein] (N-glucan mannose isomer 5A1,2) + 4 beta-D-mannose. The catalysed reaction is N(4)-(alpha-D-Man-(1-&gt;2)-alpha-D-Man-(1-&gt;2)-alpha-D-Man-(1-&gt;3)-[alpha-D-Man-(1-&gt;3)-[alpha-D-Man-(1-&gt;2)-alpha-D-Man-(1-&gt;6)]-alpha-D-Man-(1-&gt;6)]-beta-D-Man-(1-&gt;4)-beta-D-GlcNAc-(1-&gt;4)-beta-D-GlcNAc)-L-asparaginyl-[protein] (N-glucan mannose isomer 8A1,2,3B1,3) + 3 H2O = N(4)-(alpha-D-Man-(1-&gt;3)-[alpha-D-Man-(1-&gt;3)-[alpha-D-Man-(1-&gt;6)]-alpha-D-Man-(1-&gt;6)]-beta-D-Man-(1-&gt;4)-beta-D-GlcNAc-(1-&gt;4)-beta-D-GlcNAc)-L-asparaginyl-[protein] (N-glucan mannose isomer 5A1,2) + 3 beta-D-mannose. Its pathway is protein modification; protein glycosylation. Its function is as follows. Involved in the maturation of Asn-linked oligosaccharides. Progressively trims alpha-1,2-linked mannose residues from Man(9)GlcNAc(2) to produce Man(5)GlcNAc(2). The sequence is that of Mannosyl-oligosaccharide alpha-1,2-mannosidase 1B (mns1B) from Aspergillus phoenicis (Aspergillus saitoi).